Here is a 421-residue protein sequence, read N- to C-terminus: ATP-dependent RNA helicase RhlB (421 aa).

Positions 9 to 37 (THFADLPINEQVVKALSAANFSHCTPIQA) match the Q motif motif. The Helicase ATP-binding domain maps to 40–216 (LPPLLEGNDI…YEHMDNPTHV (177 aa)). Residue 53–60 (AQTGTGKT) participates in ATP binding. The DEAD box signature appears at 162–165 (DEAD). In terms of domain architecture, Helicase C-terminal spans 240–387 (KMALLLSLME…VTEYQADALL (148 aa)). Positions 389-421 (DVTPPKPRHKKRMQNGRNPQKRQSSGSRNRRKP) are disordered. Over residues 403-415 (NGRNPQKRQSSGS) the composition is skewed to polar residues.

Belongs to the DEAD box helicase family. RhlB subfamily. Component of the RNA degradosome, which is a multiprotein complex involved in RNA processing and mRNA degradation.

Its subcellular location is the cytoplasm. The catalysed reaction is ATP + H2O = ADP + phosphate + H(+). DEAD-box RNA helicase involved in RNA degradation. Has RNA-dependent ATPase activity and unwinds double-stranded RNA. The polypeptide is ATP-dependent RNA helicase RhlB (Pseudoalteromonas atlantica (strain T6c / ATCC BAA-1087)).